A 189-amino-acid chain; its full sequence is 3-hydroxyanthranilate 3,4-dioxygenase (189 aa).

Arginine 49 is an O2 binding site. Residues histidine 53, glutamate 59, and histidine 97 each coordinate Fe cation. Glutamate 59 is a binding site for substrate. The substrate site is built by arginine 101 and glutamate 112. 4 residues coordinate Fe cation: cysteine 127, cysteine 130, cysteine 165, and cysteine 168.

It belongs to the 3-HAO family. As to quaternary structure, homodimer. Fe(2+) is required as a cofactor.

It catalyses the reaction 3-hydroxyanthranilate + O2 = (2Z,4Z)-2-amino-3-carboxymuconate 6-semialdehyde. Its pathway is cofactor biosynthesis; NAD(+) biosynthesis; quinolinate from L-kynurenine: step 3/3. Catalyzes the oxidative ring opening of 3-hydroxyanthranilate to 2-amino-3-carboxymuconate semialdehyde, which spontaneously cyclizes to quinolinate. The chain is 3-hydroxyanthranilate 3,4-dioxygenase from Cupriavidus pinatubonensis (strain JMP 134 / LMG 1197) (Cupriavidus necator (strain JMP 134)).